The primary structure comprises 348 residues: D-alanine--D-alanine ligase (348 aa).

The ATP-grasp domain maps to 136–344; sequence KSVFKSYNLP…LEKLVASLIE (209 aa). Position 171–226 (171–226) interacts with ATP; sequence NKIINYPCFIKPANLGSSVGITKAYSKEEFITGIEFAAKYDERIIVEKSIEGRELE. Mg(2+) contacts are provided by Asp297, Glu311, and Asn313.

It belongs to the D-alanine--D-alanine ligase family. Mg(2+) is required as a cofactor. Requires Mn(2+) as cofactor.

The protein resides in the cytoplasm. The catalysed reaction is 2 D-alanine + ATP = D-alanyl-D-alanine + ADP + phosphate + H(+). The protein operates within cell wall biogenesis; peptidoglycan biosynthesis. Cell wall formation. The polypeptide is D-alanine--D-alanine ligase (Prochlorococcus marinus (strain NATL1A)).